Reading from the N-terminus, the 204-residue chain is ATP-dependent Clp protease proteolytic subunit (204 aa).

The active-site Nucleophile is the Ser-102. The active site involves His-127.

This sequence belongs to the peptidase S14 family. Fourteen ClpP subunits assemble into 2 heptameric rings which stack back to back to give a disk-like structure with a central cavity, resembling the structure of eukaryotic proteasomes.

It localises to the cytoplasm. It catalyses the reaction Hydrolysis of proteins to small peptides in the presence of ATP and magnesium. alpha-casein is the usual test substrate. In the absence of ATP, only oligopeptides shorter than five residues are hydrolyzed (such as succinyl-Leu-Tyr-|-NHMec, and Leu-Tyr-Leu-|-Tyr-Trp, in which cleavage of the -Tyr-|-Leu- and -Tyr-|-Trp bonds also occurs).. Its function is as follows. Cleaves peptides in various proteins in a process that requires ATP hydrolysis. Has a chymotrypsin-like activity. Plays a major role in the degradation of misfolded proteins. The polypeptide is ATP-dependent Clp protease proteolytic subunit (Neisseria gonorrhoeae (strain ATCC 700825 / FA 1090)).